We begin with the raw amino-acid sequence, 987 residues long: Pentatricopeptide repeat-containing protein At1g06710, mitochondrial (987 aa).

The transit peptide at Met-1–Met-42 directs the protein to the mitochondrion. PPR repeat units lie at residues Thr-164–Val-198, Phe-199–Pro-233, Ser-234–Met-268, Asp-269–Val-299, Asp-301–Pro-335, Asn-336–Pro-370, Ser-371–Pro-405, Gly-406–Leu-446, Asn-447–Pro-481, Asp-482–Ala-516, Asp-517–Pro-551, Asn-552–Pro-586, Asn-587–Pro-621, Asn-638–Pro-672, Asn-673–Ala-707, Thr-708–Pro-742, Asn-743–Pro-777, Asn-778–Pro-812, Asn-813–Thr-847, Phe-881–Leu-915, Tyr-918–Pro-952, and Glu-953–Leu-987.

It belongs to the PPR family. P subfamily.

It localises to the mitochondrion. The polypeptide is Pentatricopeptide repeat-containing protein At1g06710, mitochondrial (Arabidopsis thaliana (Mouse-ear cress)).